The sequence spans 71 residues: Large ribosomal subunit protein bL32c (71 aa).

The segment at 1 to 24 is disordered; it reads MAVPKKRTSRSKKKIRKNVRKGKK.

This sequence belongs to the bacterial ribosomal protein bL32 family.

It localises to the plastid. The protein resides in the chloroplast. The sequence is that of Large ribosomal subunit protein bL32c from Pinus koraiensis (Korean pine).